A 599-amino-acid polypeptide reads, in one-letter code: UvrABC system protein C (599 aa).

Residues 13-91 enclose the GIY-YIG domain; the sequence is NLPGVYRMIN…IKGFMPRYNV (79 aa). Residues 200-235 form the UVR domain; that stretch reads QQVMDELGEKMNEAAEKMEYELAAVYRDRIQSLRQV.

This sequence belongs to the UvrC family. Interacts with UvrB in an incision complex.

It is found in the cytoplasm. The UvrABC repair system catalyzes the recognition and processing of DNA lesions. UvrC both incises the 5' and 3' sides of the lesion. The N-terminal half is responsible for the 3' incision and the C-terminal half is responsible for the 5' incision. This chain is UvrABC system protein C, found in Methylobacillus flagellatus (strain ATCC 51484 / DSM 6875 / VKM B-1610 / KT).